The primary structure comprises 173 residues: Alpha-crystallin A chain (173 aa).

Methionine 1 is subject to N-acetylmethionine. One can recognise a sHSP domain in the interval 52 to 162 (LFRTVLESGI…SHNERPIPVS (111 aa)). Histidine 100, glutamate 102, histidine 107, and histidine 154 together coordinate Zn(2+). A disordered region spans residues 144-173 (PKVQSNTDPSHNERPIPVSREEKPTSAPPS). The span at 153 to 167 (SHNERPIPVSREEKP) shows a compositional bias: basic and acidic residues. An O-linked (GlcNAc) serine glycan is attached at serine 162.

It belongs to the small heat shock protein (HSP20) family. As to quaternary structure, heteropolymer composed of three CRYAA and one CRYAB subunits. Inter-subunit bridging via zinc ions enhances stability, which is crucial as there is no protein turn over in the lens. Can also form homodimers and homotetramers (dimers of dimers) which serve as the building blocks of homooligomers. Within homooligomers, the zinc-binding motif is created from residues of 3 different molecules. His-100 and Glu-102 from one molecule are ligands of the zinc ion, and His-107 and His-154 residues from additional molecules complete the site with tetrahedral coordination geometry.

It is found in the cytoplasm. Its subcellular location is the nucleus. Functionally, contributes to the transparency and refractive index of the lens. May act as a chaperone, preventing aggregation of various proteins under a wide range of stress conditions. In Tupinambis teguixin (Golden tegu), this protein is Alpha-crystallin A chain (CRYAA).